Consider the following 41-residue polypeptide: Photosystem II reaction center protein Y (41 aa).

A helical transmembrane segment spans residues 5-23 (VLIVLAPVIIAGSWALFNI).

This sequence belongs to the PsbY family. In terms of assembly, PSII is composed of 1 copy each of membrane proteins PsbA, PsbB, PsbC, PsbD, PsbE, PsbF, PsbH, PsbI, PsbJ, PsbK, PsbL, PsbM, PsbT, PsbX, PsbY, PsbZ, Psb30/Ycf12, peripheral proteins PsbO, CyanoQ (PsbQ), PsbU, PsbV and a large number of cofactors. It forms dimeric complexes.

Its subcellular location is the cellular thylakoid membrane. Functionally, loosely associated component of the core of photosystem II (PSII), it is not always seen in crystals. PSII is a light-driven water plastoquinone oxidoreductase, using light energy to abstract electrons from H(2)O, generating a proton gradient subsequently used for ATP formation. The chain is Photosystem II reaction center protein Y from Gloeothece citriformis (strain PCC 7424) (Cyanothece sp. (strain PCC 7424)).